Consider the following 439-residue polypeptide: Proline--tRNA ligase (439 aa).

It belongs to the class-II aminoacyl-tRNA synthetase family. ProS type 2 subfamily. As to quaternary structure, homodimer.

Its subcellular location is the cytoplasm. The catalysed reaction is tRNA(Pro) + L-proline + ATP = L-prolyl-tRNA(Pro) + AMP + diphosphate. Catalyzes the attachment of proline to tRNA(Pro) in a two-step reaction: proline is first activated by ATP to form Pro-AMP and then transferred to the acceptor end of tRNA(Pro). The protein is Proline--tRNA ligase of Rhodopseudomonas palustris (strain BisA53).